Here is a 327-residue protein sequence, read N- to C-terminus: Elongation factor P--(R)-beta-lysine ligase (327 aa).

Residue 80 to 82 coordinates substrate; that stretch reads SPE. Residues 104 to 106 and N113 each bind ATP; that span reads RNE. Residue Y122 participates in substrate binding. ATP is bound at residue 246–247; it reads EL. Position 253 (E253) interacts with substrate. An ATP-binding site is contributed by G302.

It belongs to the class-II aminoacyl-tRNA synthetase family. EpmA subfamily. As to quaternary structure, homodimer.

It carries out the reaction D-beta-lysine + L-lysyl-[protein] + ATP = N(6)-((3R)-3,6-diaminohexanoyl)-L-lysyl-[protein] + AMP + diphosphate + H(+). Functionally, with EpmB is involved in the beta-lysylation step of the post-translational modification of translation elongation factor P (EF-P). Catalyzes the ATP-dependent activation of (R)-beta-lysine produced by EpmB, forming a lysyl-adenylate, from which the beta-lysyl moiety is then transferred to the epsilon-amino group of a conserved specific lysine residue in EF-P. In Haemophilus ducreyi (strain 35000HP / ATCC 700724), this protein is Elongation factor P--(R)-beta-lysine ligase.